Consider the following 332-residue polypeptide: Malate dehydrogenase 1, cytoplasmic (332 aa).

NAD(+) is bound by residues 16 to 17 (QI) and Asp-43. Met-56 is subject to Methionine sulfoxide. Gly-90 contributes to the NAD(+) binding site. Met-97 is modified (methionine sulfoxide). An oxaloacetate-binding site is contributed by Arg-99. Gln-113 is a binding site for NAD(+). Lys-119 is covalently cross-linked (Glycyl lysine isopeptide (Lys-Gly) (interchain with G-Cter in ubiquitin)). Asn-132 provides a ligand contact to NAD(+). 4 residues coordinate oxaloacetate: Asn-132, Arg-163, His-188, and Ser-243. His-188 (proton acceptor) is an active-site residue.

Belongs to the LDH/MDH superfamily. MDH type 2 family. As to quaternary structure, forms a homodimer. Forms a disulfide-linked homodimer upon oxidation. Interacts with 14-3-3-like proteins GRF1 GRF3 and GRF8. Interacts with TRX1, TRX2, TRX3, TRX4 and TRX5. As to expression, expressed in rosette leaves.

The protein localises to the cytoplasm. It catalyses the reaction (S)-malate + NAD(+) = oxaloacetate + NADH + H(+). Its activity is regulated as follows. Decreased activity upon treatment with hydrogen peroxide. Catalyzes a reversible NAD-dependent dehydrogenase reaction involved in central metabolism and redox homeostasis between organellar compartments. The protein is Malate dehydrogenase 1, cytoplasmic (MDH1) of Arabidopsis thaliana (Mouse-ear cress).